Here is a 382-residue protein sequence, read N- to C-terminus: Chaperone protein DnaJ (382 aa).

One can recognise a J domain in the interval 6–70 (DYYEILGLPK…EKRAQYDRFG (65 aa)). A CR-type zinc finger spans residues 131-213 (GVRKDIDIPR…CGGAGRVRNK (83 aa)). C144, C147, C161, C164, C187, C190, C201, and C204 together coordinate Zn(2+). CXXCXGXG motif repeat units lie at residues 144–151 (CSTCSGTG), 161–168 (CPTCGGTG), 187–194 (CSTCHGRG), and 201–208 (CPVCGGAG). Positions 146-168 (TCSGTGAKPGTSPKRCPTCGGTG) are disordered. The segment at 348–382 (FENLSKGKKPQEEEKSKAEKHKKGIFEKVKDAFES) is disordered. Residues 371–382 (GIFEKVKDAFES) are compositionally biased toward basic and acidic residues.

Belongs to the DnaJ family. Homodimer. The cofactor is Zn(2+).

The protein localises to the cytoplasm. In terms of biological role, participates actively in the response to hyperosmotic and heat shock by preventing the aggregation of stress-denatured proteins and by disaggregating proteins, also in an autonomous, DnaK-independent fashion. Unfolded proteins bind initially to DnaJ; upon interaction with the DnaJ-bound protein, DnaK hydrolyzes its bound ATP, resulting in the formation of a stable complex. GrpE releases ADP from DnaK; ATP binding to DnaK triggers the release of the substrate protein, thus completing the reaction cycle. Several rounds of ATP-dependent interactions between DnaJ, DnaK and GrpE are required for fully efficient folding. Also involved, together with DnaK and GrpE, in the DNA replication of plasmids through activation of initiation proteins. The polypeptide is Chaperone protein DnaJ (Methanosarcina acetivorans (strain ATCC 35395 / DSM 2834 / JCM 12185 / C2A)).